Reading from the N-terminus, the 476-residue chain is Nyctalopin (476 aa).

The N-terminal stretch at 1-18 (MLILLLHAVVFSLPYTRA) is a signal peptide. Residues 19-57 (TEACLRACPAACTCSHVERGCSVRCDRAGLQRVPQEFPC) form the LRRNT domain. LRR repeat units lie at residues 58–79 (EAASIDLDRNGLRILGERAFGT), 82–103 (SLRRLSLRHNNLSFITPGAFKG), 106–128 (RLAELRLAHNGELRYLHVRTFAA), 131–154 (RLRRLDLAACRLFSVPERLLAELP), 155–177 (ALRELTAFDNLFRRVPGALRGLA), 178–199 (NLTHAHFERSRIEAVASGSLLG), 202–223 (RLRSLSLQANRVRAVHAGAFGD), 226–247 (ALEDLLLNDNLLATLPAAAFRG), 250–271 (RLRTLNLGGNALGSVARAWFSD), 274–295 (ELELLYLDRNSITFVEEGAFQN), and 298–319 (GLLALHLNGNRLTVLSWAAFQP). N-linked (GlcNAc...) asparagine glycosylation occurs at N92. A glycan (N-linked (GlcNAc...) asparagine) is linked at N178. An N-linked (GlcNAc...) asparagine glycan is attached at N295. The LRRCT domain occupies 331–383 (NPWRCDCQLEWLRDWMEGSGRVADVACASPGSVAGQDLSQVVFERSSDGLCVD). Residues N388, N427, N434, and N438 are each glycosylated (N-linked (GlcNAc...) asparagine).

This sequence belongs to the small leucine-rich proteoglycan (SLRP) family. SLRP class IV subfamily. As to expression, expressed abundantly in retina with lower levels in brain, lung, spleen and testis. Not detected in kidney, heart or liver. In the retina, highest expression found in the inner nuclear layer and ganglion cell layer.

It is found in the secreted. It localises to the extracellular space. The protein resides in the extracellular matrix. The polypeptide is Nyctalopin (Nyx) (Mus musculus (Mouse)).